The chain runs to 107 residues: Ig kappa chain V-VI region TEPC 601/TEPC 191 (107 aa).

The tract at residues 1–23 is framework-1; that stretch reads EIVLTQSPAITAASLGQKVTITC. C23 and C87 are oxidised to a cystine. Residues 24 to 33 form a complementarity-determining-1 region; it reads SASSSVSYMH. The interval 34 to 48 is framework-2; the sequence is WYQQKSGTSPKPWIY. Residues 49–55 are complementarity-determining-2; the sequence is EISKLAS. Residues 56 to 87 form a framework-3 region; it reads GVPARFSGSGSGTSYSLTISSMEAEDAAIYYC. The segment at 88 to 96 is complementarity-determining-3; that stretch reads QQWNYPLIT. Positions 97 to 106 are framework-4; sequence FGAGTKLELK.

This Mus musculus (Mouse) protein is Ig kappa chain V-VI region TEPC 601/TEPC 191.